A 181-amino-acid chain; its full sequence is Monofunctional chorismate mutase (181 aa).

An N-terminal signal peptide occupies residues 1–20 (MIRHIAIFLCSLLMCSTTFA). The 82-residue stretch at 21–102 (DSVTSVSLGA…ASKAIQYRYL (82 aa)) folds into the Chorismate mutase domain. The substrate site is built by Arg-38, Lys-49, Asp-58, Glu-62, and Gln-98.

The protein localises to the periplasm. It carries out the reaction chorismate = prephenate. It functions in the pathway metabolic intermediate biosynthesis; prephenate biosynthesis; prephenate from chorismate: step 1/1. In terms of biological role, catalyzes the Claisen rearrangement of chorismate to prephenate. The protein is Monofunctional chorismate mutase of Salmonella typhimurium.